The sequence spans 359 residues: Methyltransferase fsa4 (359 aa).

S-adenosyl-L-methionine-binding positions include 198–199 (GG), aspartate 224, 248–249 (SF), arginine 264, and arginine 265.

It belongs to the class I-like SAM-binding methyltransferase superfamily. Cation-independent O-methyltransferase family.

Its pathway is mycotoxin biosynthesis. Functionally, methyltransferase; part of the gene cluster that mediates the biosynthesis of HIV-1 integrase inhibitor equisetin and of fusarisetin A, both trans-fused decalin-containing tetramic acids showing also antimicrobial activity. The PKS module of fsa1 together with the enoylreductase fsa3 catalyze the formation of the polyketide unit which is then conjugated to L-serine by the condensation domain of the fsa1 NRPS module. Activity of the Dieckmann cyclase domain (RED) results in release of the Dieckmann product intermediate. Diels-Alderase fsa2 is involved in endo-selective Diels-Alder cycloaddition to form the decalin ring, leading to the production of N-desmethylequisetin also called trichosetin. Subsequent N-methylation is carried out by fsa4 to give equisetin. The enzymatic gene responsible for the conversion of equisetin to fusarisetin A has not been identified yet and is probably located outside of the fsa cluster. The chain is Methyltransferase fsa4 from Fusarium sp. (strain FN080326).